The chain runs to 164 residues: MVNPTVFFDIAVDGEPLGRVSFELFADKVPKTAENFRALSTGEKGFGYKGSCFHRIIPGFMCQGGDFTRHNGTGGKSIYGEKFEDENFLLKHTGPGILSMANAGPNTNGSQFFICTAKTEWLDGKHVVFGRVKEGMSIVEAMEHFGSENGKTSKKITIANCGQL.

Met1 bears the N-acetylmethionine mark. Residue Val2 is modified to N-acetylvaline; in Peptidyl-prolyl cis-trans isomerase A, N-terminally processed. The region spanning 7–163 (FFDIAVDGEP…KKITIANCGQ (157 aa)) is the PPIase cyclophilin-type domain. Residue Lys28 is modified to N6-acetyllysine; alternate. Lys28 participates in a covalent cross-link: Glycyl lysine isopeptide (Lys-Gly) (interchain with G-Cter in SUMO2); alternate. Lys28 participates in a covalent cross-link: Glycyl lysine isopeptide (Lys-Gly) (interchain with G-Cter in ubiquitin); alternate. An N6-acetyllysine mark is found at Lys44 and Lys76. At Ser77 the chain carries Phosphoserine. At Lys82 the chain carries N6-acetyllysine; alternate. A Glycyl lysine isopeptide (Lys-Gly) (interchain with G-Cter in SUMO2); alternate cross-link involves residue Lys82. Thr93 is subject to Phosphothreonine. A glycan (N-linked (GlcNAc...) asparagine) is linked at Asn108. N6-acetyllysine is present on residues Lys125 and Lys133.

The protein belongs to the cyclophilin-type PPIase family. PPIase A subfamily. In terms of assembly, interacts with protein phosphatase PPP3CA/calcineurin A. Interacts with isoform 2 of BSG/CD147. Interacts with FOXO1; the interaction promotes FOXO1 dephosphorylation, nuclear accumulation and transcriptional activity. Interacts with integrin ITGA2B:ITGB3; the interaction is ROS and peptidyl-prolyl cis-trans isomerase (PPIase) activity-dependent and is increased in the presence of thrombin. Interacts with MAP3K5. Interacts with TARDBP; the interaction is dependent on the RNA-binding activity of TARDBP and the PPIase activity of PPIA/CYPA and the acetylation of PPIA/CYPA at Lys-125 favors the interaction. Interacts with HNRNPA1, HNRNPA2B1, HNRNPC, RBMX, HNRNPK and HNRNPM. Post-translationally, acetylation at Lys-125 markedly inhibits catalysis of cis to trans isomerization. PPIA acetylation also antagonizes the immunosuppressive effects of cyclosporine by inhibiting the sequential steps of cyclosporine binding and calcineurin inhibition. Acetylation at Lys-125 favors the interaction with TARDBP.

It localises to the cytoplasm. It is found in the secreted. The protein localises to the nucleus. It carries out the reaction [protein]-peptidylproline (omega=180) = [protein]-peptidylproline (omega=0). Binds cyclosporin A (CsA). CsA mediates some of its effects via an inhibitory action on PPIase. Catalyzes the cis-trans isomerization of proline imidic peptide bonds in oligopeptides. Exerts a strong chemotactic effect on leukocytes partly through activation of one of its membrane receptors BSG/CD147, initiating a signaling cascade that culminates in MAPK/ERK activation. Activates endothelial cells (ECs) in a proinflammatory manner by stimulating activation of NF-kappa-B and ERK, JNK and p38 MAP-kinases and by inducing expression of adhesion molecules including SELE and VCAM1. Induces apoptosis in ECs by promoting the FOXO1-dependent expression of CCL2 and BCL2L11 which are involved in EC chemotaxis and apoptosis. In response to oxidative stress, initiates proapoptotic and antiapoptotic signaling in ECs via activation of NF-kappa-B and AKT1 and up-regulation of antiapoptotic protein BCL2. Negatively regulates MAP3K5/ASK1 kinase activity, autophosphorylation and oxidative stress-induced apoptosis mediated by MAP3K5/ASK1. Necessary for the assembly of TARDBP in heterogeneous nuclear ribonucleoprotein (hnRNP) complexes and regulates TARDBP binding to RNA UG repeats and TARDBP-dependent expression of HDAC6, ATG7 and VCP which are involved in clearance of protein aggregates. Plays an important role in platelet activation and aggregation. Regulates calcium mobilization and integrin ITGA2B:ITGB3 bidirectional signaling via increased ROS production as well as by facilitating the interaction between integrin and the cell cytoskeleton. Binds heparan sulfate glycosaminoglycans. This chain is Peptidyl-prolyl cis-trans isomerase A (PPIA), found in Oryctolagus cuniculus (Rabbit).